We begin with the raw amino-acid sequence, 303 residues long: Protein SULFUR DEFICIENCY-INDUCED 2 (303 aa).

Residues 62–89 adopt a coiled-coil conformation; it reads RVDSALKDMALLMKQQNRAEEAIDAIQS. TPR repeat units follow at residues 64–97, 100–133, 160–193, and 195–226; these read DSAL…CSRQ, ESLD…IYQG, SRIL…EPDA, and KACN…ENKE. Residues 232–253 adopt a coiled-coil conformation; that stretch reads RLMARVQELLSELKPQEEEAAA.

This sequence belongs to the MS5 protein family.

The protein localises to the nucleus. Involved in the utilization of stored sulfate under sulfur-deficient conditions. The polypeptide is Protein SULFUR DEFICIENCY-INDUCED 2 (Arabidopsis thaliana (Mouse-ear cress)).